A 321-amino-acid polypeptide reads, in one-letter code: Beta-ketoacyl-[acyl-carrier-protein] synthase III (321 aa).

Residues C113 and H246 contribute to the active site. Positions 247–251 are ACP-binding; it reads QANVR. N276 is a catalytic residue.

Belongs to the thiolase-like superfamily. FabH family. Homodimer.

The protein localises to the cytoplasm. The catalysed reaction is malonyl-[ACP] + acetyl-CoA + H(+) = 3-oxobutanoyl-[ACP] + CO2 + CoA. The protein operates within lipid metabolism; fatty acid biosynthesis. Its function is as follows. Catalyzes the condensation reaction of fatty acid synthesis by the addition to an acyl acceptor of two carbons from malonyl-ACP. Catalyzes the first condensation reaction which initiates fatty acid synthesis and may therefore play a role in governing the total rate of fatty acid production. Possesses both acetoacetyl-ACP synthase and acetyl transacylase activities. Its substrate specificity determines the biosynthesis of branched-chain and/or straight-chain of fatty acids. This is Beta-ketoacyl-[acyl-carrier-protein] synthase III from Enterococcus faecalis (strain ATCC 700802 / V583).